An 88-amino-acid chain; its full sequence is Elongation factor 1-beta (88 aa).

The protein belongs to the EF-1-beta/EF-1-delta family.

Its function is as follows. Promotes the exchange of GDP for GTP in EF-1-alpha/GDP, thus allowing the regeneration of EF-1-alpha/GTP that could then be used to form the ternary complex EF-1-alpha/GTP/AAtRNA. The protein is Elongation factor 1-beta of Haloarcula marismortui (strain ATCC 43049 / DSM 3752 / JCM 8966 / VKM B-1809) (Halobacterium marismortui).